A 236-amino-acid polypeptide reads, in one-letter code: Ubiquinone biosynthesis O-methyltransferase (236 aa).

4 residues coordinate S-adenosyl-L-methionine: R39, G59, D80, and M124.

Belongs to the methyltransferase superfamily. UbiG/COQ3 family.

The catalysed reaction is a 3-demethylubiquinol + S-adenosyl-L-methionine = a ubiquinol + S-adenosyl-L-homocysteine + H(+). It catalyses the reaction a 3-(all-trans-polyprenyl)benzene-1,2-diol + S-adenosyl-L-methionine = a 2-methoxy-6-(all-trans-polyprenyl)phenol + S-adenosyl-L-homocysteine + H(+). The protein operates within cofactor biosynthesis; ubiquinone biosynthesis. In terms of biological role, O-methyltransferase that catalyzes the 2 O-methylation steps in the ubiquinone biosynthetic pathway. The protein is Ubiquinone biosynthesis O-methyltransferase of Shewanella sp. (strain MR-4).